Reading from the N-terminus, the 813-residue chain is Calpain-7 (813 aa).

An N-acetylmethionine modification is found at Met-1. Thr-95 bears the Phosphothreonine mark. A Calpain catalytic domain is found at 232 to 540 (RERFAYPMPF…YDVIYLSWNP (309 aa)). Catalysis depends on residues Cys-290, His-458, and Asn-478. Positions 541–701 (GLLKESTCIH…INGKWSGQSA (161 aa)) are domain III. The domain N stretch occupies residues 702–813 (GGCGNFQETH…VIPIKTTQLQ (112 aa)).

This sequence belongs to the peptidase C2 family.

Its subcellular location is the nucleus. Its function is as follows. Calcium-regulated non-lysosomal thiol-protease. This is Calpain-7 (CAPN7) from Sus scrofa (Pig).